We begin with the raw amino-acid sequence, 348 residues long: S-adenosyl-L-methionine-dependent methyl transferase PigF (348 aa).

Glutamate 199 contributes to the S-adenosyl-L-methionine binding site. Histidine 247 (proton acceptor) is an active-site residue.

Belongs to the class I-like SAM-binding methyltransferase superfamily. Cation-independent O-methyltransferase family.

It functions in the pathway antibiotic biosynthesis; prodigiosin biosynthesis. Involved in the biosynthesis of 4-methoxy-2,2'-bipyrrole-5-carbaldehyde (MBC), one of the terminal products involved in the biosynthesis of the red antibiotic prodigiosin (Pig). Catalyzes the transfer of a methyl group from S-adenosyl-L-methionine (SAM) to the hydroxyl group of 4-hydroxy-2,2'-bipyrrole-5-carbaldehyde (HBC) to yield 4-methoxy-2,2'-bipyrrole-5-carbaldehyde (MBC). This is S-adenosyl-L-methionine-dependent methyl transferase PigF from Serratia sp. (strain ATCC 39006) (Prodigiosinella confusarubida).